Reading from the N-terminus, the 104-residue chain is Zinc-containing ferredoxin-1 (104 aa).

Residues 2-37 are N-terminal extension; the sequence is GIDPNYRTNRQVVGEHSGHKVYGPVEPPKVLGIHGT. Zn(2+) is bound by residues His-17 and His-20. Lys-30 is subject to N6-methyllysine. His-35 provides a ligand contact to Zn(2+). 4Fe-4S ferredoxin-type domains are found at residues 38-66 and 75-104; these read IVGV…WYDT and KADP…VKPP. Cys-46 and Cys-52 together coordinate [3Fe-4S] cluster. Cys-56 contributes to the [4Fe-4S] cluster binding site. Asp-77 provides a ligand contact to Zn(2+). The [4Fe-4S] cluster site is built by Cys-84, Cys-87, and Cys-90. Cys-94 lines the [3Fe-4S] cluster pocket.

Requires [3Fe-4S] cluster as cofactor. The cofactor is [4Fe-4S] cluster. Zn(2+) serves as cofactor.

Functionally, ferredoxins are iron-sulfur proteins that transfer electrons in a wide variety of metabolic reactions. This Sulfurisphaera tokodaii (strain DSM 16993 / JCM 10545 / NBRC 100140 / 7) (Sulfolobus tokodaii) protein is Zinc-containing ferredoxin-1 (zfx1).